The primary structure comprises 141 residues: Secreted RxLR effector protein 69 (141 aa).

A signal peptide spans 1–19; that stretch reads MHSSTILFVLGAAILAVNG. The RxLR-dEER motif lies at 38–53; that stretch reads RLLRSNLMKHETGEER. Asn-120 carries an N-linked (GlcNAc...) asparagine glycan.

It belongs to the RxLR effector family.

It is found in the secreted. The protein resides in the host nucleus. In terms of biological role, secreted effector that completely suppresses the host cell death induced by cell death-inducing proteins. The polypeptide is Secreted RxLR effector protein 69 (Plasmopara viticola (Downy mildew of grapevine)).